A 375-amino-acid polypeptide reads, in one-letter code: uncharacterized protein (375 aa).

This is an uncharacterized protein from Ureaplasma parvum serovar 3 (strain ATCC 700970).